Reading from the N-terminus, the 398-residue chain is NADH-quinone oxidoreductase subunit D (398 aa).

This sequence belongs to the complex I 49 kDa subunit family. As to quaternary structure, NDH-1 is composed of 14 different subunits. Subunits NuoB, C, D, E, F, and G constitute the peripheral sector of the complex.

Its subcellular location is the cell inner membrane. It carries out the reaction a quinone + NADH + 5 H(+)(in) = a quinol + NAD(+) + 4 H(+)(out). In terms of biological role, NDH-1 shuttles electrons from NADH, via FMN and iron-sulfur (Fe-S) centers, to quinones in the respiratory chain. The immediate electron acceptor for the enzyme in this species is believed to be ubiquinone. Couples the redox reaction to proton translocation (for every two electrons transferred, four hydrogen ions are translocated across the cytoplasmic membrane), and thus conserves the redox energy in a proton gradient. This chain is NADH-quinone oxidoreductase subunit D, found in Rhodospirillum centenum (strain ATCC 51521 / SW).